We begin with the raw amino-acid sequence, 514 residues long: MSTKNNSNVPEISDEEFYKNRLLTVTEQLKDNVQVYPHKYEVNYRFKDIFTFKDASEEDLKKVKVQSAGRILNFRIHARYSFFQVMSEDFTIQLVVDAQVLENKDIISNIKRGDIVGFSGVLGRTKTKEFSVFIKELSILTPCLRTIPTDYYGLKDPEIIYRKRYLDLLINKESKNRFIQRTNIIKFIRKYLDDKDFVEVETPLLNIIPTGAAAKPFTTHHNELKMNLFLRIAPELYLKKLVIGGMDRVYEIGKLFRNEGIDLTHNPEFTACEFYMAYADYNDMMNMAEEMLNGMCKYLHGSEKIVYAPNKREKEVKPVEINFARPFARFHMLEELSKVVGIKLDGLNINSDETLDLLIETCDKYEIKVEQPKTLTRVLDKLVGHFIEPKCINPSFIIGYPLVTSPLAKNHRSEAGMVERFELFINGKEICNAYTELNNPIEQRMRFKMQAQDINDGDDEAMITDEDFCVALEYGLPPTGGFGMGIDRLTMFMTDAANIKDVILFPAMKPESDN.

Belongs to the class-II aminoacyl-tRNA synthetase family. In terms of assembly, homodimer.

The protein resides in the cytoplasm. The catalysed reaction is tRNA(Lys) + L-lysine + ATP = L-lysyl-tRNA(Lys) + AMP + diphosphate. In Vairimorpha ceranae (strain BRL01) (Microsporidian parasite), this protein is Probable lysine--tRNA ligase, cytoplasmic.